The sequence spans 110 residues: Iron-sulfur cluster assembly protein CyaY (110 aa).

This sequence belongs to the frataxin family.

In terms of biological role, involved in iron-sulfur (Fe-S) cluster assembly. May act as a regulator of Fe-S biogenesis. This chain is Iron-sulfur cluster assembly protein CyaY, found in Paracidovorax citrulli (strain AAC00-1) (Acidovorax citrulli).